The chain runs to 307 residues: Protein TIPIN homolog (307 aa).

2 disordered regions span residues 1-50 (MASL…SQDA) and 252-279 (ASMD…LSNE). The span at 262–271 (PLPPSQPPTP) shows a compositional bias: pro residues.

This sequence belongs to the CSM3 family.

Its subcellular location is the cytoplasm. The protein localises to the nucleus. Functionally, required for normal progression of S-phase. Important for cell survival after DNA damage or replication stress. This chain is Protein TIPIN homolog, found in Drosophila melanogaster (Fruit fly).